The following is a 28-amino-acid chain: uncharacterized protein (28 aa).

This is an uncharacterized protein from Escherichia coli (Bacteriophage T4).